The chain runs to 216 residues: PEP-dependent dihydroxyacetone kinase 2, ADP-binding subunit DhaL (216 aa).

The 202-residue stretch at 9–210 folds into the DhaL domain; it reads AFFGHVLQDM…SWMLMNVILE (202 aa). Mg(2+) is bound by residues Asp33, Asp38, and Asp40. Residues 41-44, 84-85, Gly126, Met135, Arg182, and 195-197 each bind ADP; these read HGIN, AS, and DPG.

Homodimer. The dihydroxyacetone kinase complex is composed of a homodimer of DhaM, a homodimer of DhaK and the subunit DhaL. It depends on Mg(2+) as a cofactor.

Its subcellular location is the cytoplasm. It carries out the reaction dihydroxyacetone + phosphoenolpyruvate = dihydroxyacetone phosphate + pyruvate. It functions in the pathway polyol metabolism; glycerol degradation. ADP-binding subunit of the dihydroxyacetone kinase, which is responsible for the phosphoenolpyruvate (PEP)-dependent phosphorylation of dihydroxyacetone. DhaL-ADP is converted to DhaL-ATP via a phosphoryl group transfer from DhaM and transmits it to dihydroxyacetone binds to DhaK. The sequence is that of PEP-dependent dihydroxyacetone kinase 2, ADP-binding subunit DhaL from Listeria innocua serovar 6a (strain ATCC BAA-680 / CLIP 11262).